Reading from the N-terminus, the 139-residue chain is Immunogenic miracidial antigen 8I' (139 aa).

Residues 61–139 (IDVGDEDYHD…PKKYGSGYKH (79 aa)) are disordered. Over residues 64–85 (GDEDYHDGDDDVDYTDDVDDVD) the composition is skewed to acidic residues. A compositionally biased stretch (polar residues) spans 90-103 (SPSQLLQGGYQRNQ).

It belongs to the immunogenic miracidial antigen family.

The sequence is that of Immunogenic miracidial antigen 8I' (8I') from Schistosoma japonicum (Blood fluke).